A 171-amino-acid polypeptide reads, in one-letter code: Translationally-controlled tumor protein homolog (171 aa).

A TCTP domain is found at 1–171 (MKIWKDIFTG…FKHGLEEEKF (171 aa)).

It belongs to the TCTP family.

Its subcellular location is the cytoplasm. Involved in calcium binding and microtubule stabilization. The protein is Translationally-controlled tumor protein homolog (Tctp) of Aedes albopictus (Asian tiger mosquito).